The chain runs to 511 residues: 2,3-bisphosphoglycerate-independent phosphoglycerate mutase (511 aa).

Aspartate 12 lines the Mn(2+) pocket. The residue at position 36 (tyrosine 36) is a Phosphotyrosine. Position 62 (serine 62) interacts with Mn(2+). Residue serine 62 is the Phosphoserine intermediate of the active site. Residues histidine 123, 153-154, arginine 185, arginine 191, 261-264, and lysine 336 contribute to the substrate site; these read RD and RPDR. Mn(2+)-binding residues include aspartate 403, histidine 407, aspartate 444, histidine 445, and histidine 462.

The protein belongs to the BPG-independent phosphoglycerate mutase family. Monomer. Requires Mn(2+) as cofactor.

It catalyses the reaction (2R)-2-phosphoglycerate = (2R)-3-phosphoglycerate. It participates in carbohydrate degradation; glycolysis; pyruvate from D-glyceraldehyde 3-phosphate: step 3/5. Its function is as follows. Essential for rapid growth and for sporulation. Catalyzes the interconversion of 2-phosphoglycerate and 3-phosphoglycerate. This Bacillus pumilus (strain SAFR-032) protein is 2,3-bisphosphoglycerate-independent phosphoglycerate mutase.